The following is a 277-amino-acid chain: Uridine-cytidine kinase 1 (277 aa).

Residues 1 to 30 are disordered; the sequence is MASAGGEDCESPAPEADRPHQRPFLIGVSG. Residue 30 to 38 coordinates ATP; sequence GGTASGKST. Asp-65 is a catalytic residue. The substrate site is built by Asp-87, Tyr-115, His-120, Arg-169, Arg-178, and Gln-186. Asp-215 serves as a coordination point for ATP. Positions 247–277 are disordered; it reads SYKRTFSEPGDHPGMLTSGKRSHLESSSRPH. The residue at position 251 (Thr-251) is a Phosphothreonine. The residue at position 253 (Ser-253) is a Phosphoserine. A compositionally biased stretch (basic and acidic residues) spans 268–277; that stretch reads SHLESSSRPH.

It belongs to the uridine kinase family. In terms of tissue distribution, ubiquitous.

It carries out the reaction uridine + ATP = UMP + ADP + H(+). The catalysed reaction is cytidine + ATP = CMP + ADP + H(+). The protein operates within pyrimidine metabolism; CTP biosynthesis via salvage pathway; CTP from cytidine: step 1/3. Its pathway is pyrimidine metabolism; UMP biosynthesis via salvage pathway; UMP from uridine: step 1/1. Functionally, phosphorylates uridine and cytidine to uridine monophosphate and cytidine monophosphate. Does not phosphorylate deoxyribonucleosides or purine ribonucleosides. Can use ATP or GTP as a phosphate donor. Can also phosphorylate cytidine and uridine nucleoside analogs such as 6-azauridine, 5-fluorouridine, 4-thiouridine, 5-bromouridine, N(4)-acetylcytidine, N(4)-benzoylcytidine, 5-fluorocytidine, 2-thiocytidine, 5-methylcytidine, and N(4)-anisoylcytidine. The protein is Uridine-cytidine kinase 1 (UCK1) of Homo sapiens (Human).